The sequence spans 473 residues: Cysteine--tRNA ligase (473 aa).

Cys-28 lines the Zn(2+) pocket. The short motif at 30-40 (PTVYNMPHIGN) is the 'HIGH' region element. Residues Cys-213, His-238, and Glu-242 each contribute to the Zn(2+) site. The short motif at 270 to 274 (KMSKS) is the 'KMSKS' region element. ATP is bound at residue Lys-273.

Belongs to the class-I aminoacyl-tRNA synthetase family. Zn(2+) is required as a cofactor.

The protein localises to the cytoplasm. The enzyme catalyses tRNA(Cys) + L-cysteine + ATP = L-cysteinyl-tRNA(Cys) + AMP + diphosphate. This is Cysteine--tRNA ligase from Methanosarcina mazei (strain ATCC BAA-159 / DSM 3647 / Goe1 / Go1 / JCM 11833 / OCM 88) (Methanosarcina frisia).